The sequence spans 149 residues: UPF0756 membrane protein Nther_1957 (149 aa).

A run of 4 helical transmembrane segments spans residues 5-25 (IVVL…LVAT), 52-72 (LGIL…DIMP), 85-105 (LIAV…VELL), and 111-131 (VMVG…GVPA).

The protein belongs to the UPF0756 family.

Its subcellular location is the cell membrane. The sequence is that of UPF0756 membrane protein Nther_1957 from Natranaerobius thermophilus (strain ATCC BAA-1301 / DSM 18059 / JW/NM-WN-LF).